The sequence spans 414 residues: MEQPIPVTRQSFDEWIVPTYAPADFIVVRGEGATLWDQQGKSYIDFAGGIAVNALGHGHPAVKAALIEQADKVWHLGNGYTNEPVLRLAKQLIDATFAEKVFFCNSGAEANEAALKLARKYALDNFANKPGQQGEKNQIVAFRNAFHGRTLFTVSAGGQPKYSQDFAPLPGGISHGIFNDLASAEALITDQTCAVIVEPIQGEGGVLPADSEFLHGLRALCDRHNAVLIFDEVQTGVGRTGELYAYMHYGVTPDVLTSAKALGGGFPIAAMLTTTKYASALNVGSHGTTYGGNPLACAVAGTVLSLINTPAVLSGVKERHQWFLEGLADINARYKVFAEIRGRGLLIGCVLNSDYAGKSKDIIQAAAQHGIIALIAGPDVVRFAPSLIISQHDIKEGLARLAMGIEQVCRKAKS.

Residue lysine 260 is modified to N6-(pyridoxal phosphate)lysine.

Belongs to the class-III pyridoxal-phosphate-dependent aminotransferase family. AstC subfamily. Requires pyridoxal 5'-phosphate as cofactor.

It catalyses the reaction N(2)-succinyl-L-ornithine + 2-oxoglutarate = N-succinyl-L-glutamate 5-semialdehyde + L-glutamate. The protein operates within amino-acid degradation; L-arginine degradation via AST pathway; L-glutamate and succinate from L-arginine: step 3/5. In terms of biological role, catalyzes the transamination of N(2)-succinylornithine and alpha-ketoglutarate into N(2)-succinylglutamate semialdehyde and glutamate. Can also act as an acetylornithine aminotransferase. The protein is Succinylornithine transaminase of Yersinia enterocolitica serotype O:8 / biotype 1B (strain NCTC 13174 / 8081).